A 262-amino-acid chain; its full sequence is Phosphonates import ATP-binding protein PhnC (262 aa).

Residues isoleucine 5–asparagine 253 form the ABC transporter domain. Residue glycine 37–serine 44 participates in ATP binding.

Belongs to the ABC transporter superfamily. Phosphonates importer (TC 3.A.1.9.1) family. In terms of assembly, the complex is composed of two ATP-binding proteins (PhnC), two transmembrane proteins (PhnE) and a solute-binding protein (PhnD).

It localises to the cell inner membrane. It carries out the reaction phosphonate(out) + ATP + H2O = phosphonate(in) + ADP + phosphate + H(+). Part of the ABC transporter complex PhnCDE involved in phosphonates, phosphate esters, phosphite and phosphate import. Responsible for energy coupling to the transport system. The sequence is that of Phosphonates import ATP-binding protein PhnC from Escherichia coli (strain K12).